Here is a 284-residue protein sequence, read N- to C-terminus: Small ribosomal subunit protein uS2 (284 aa).

Residues 250–272 (QELLAGATASPTAAGAAPGTPEA) are compositionally biased toward low complexity. The disordered stretch occupies residues 250-284 (QELLAGATASPTAAGAAPGTPEADIQTEPTAPQNP).

It belongs to the universal ribosomal protein uS2 family.

The polypeptide is Small ribosomal subunit protein uS2 (Mycobacterium sp. (strain KMS)).